The chain runs to 425 residues: Serine hydroxymethyltransferase (425 aa).

(6S)-5,6,7,8-tetrahydrofolate-binding positions include L128 and 132–134 (GHL). Position 237 is an N6-(pyridoxal phosphate)lysine (K237).

Belongs to the SHMT family. Homodimer. Pyridoxal 5'-phosphate serves as cofactor.

The protein resides in the cytoplasm. It carries out the reaction (6R)-5,10-methylene-5,6,7,8-tetrahydrofolate + glycine + H2O = (6S)-5,6,7,8-tetrahydrofolate + L-serine. Its pathway is one-carbon metabolism; tetrahydrofolate interconversion. The protein operates within amino-acid biosynthesis; glycine biosynthesis; glycine from L-serine: step 1/1. Its function is as follows. Catalyzes the reversible interconversion of serine and glycine with tetrahydrofolate (THF) serving as the one-carbon carrier. This reaction serves as the major source of one-carbon groups required for the biosynthesis of purines, thymidylate, methionine, and other important biomolecules. Also exhibits THF-independent aldolase activity toward beta-hydroxyamino acids, producing glycine and aldehydes, via a retro-aldol mechanism. This Wolbachia pipientis wMel protein is Serine hydroxymethyltransferase.